We begin with the raw amino-acid sequence, 196 residues long: Heat shock protein beta-8 (196 aa).

Positions 1 to 28 (MADGQLPFPCSYPSRLRRDPFRDSPLSS) are disordered. 2 positions are modified to phosphoserine: serine 24 and serine 57. Residue threonine 63 is modified to Phosphothreonine. 2 positions are modified to asymmetric dimethylarginine: arginine 71 and arginine 78. The region spanning 78 to 185 (RFGVPAEGRS…PFGESSFNNE (108 aa)) is the sHSP domain. Serine 87 carries the post-translational modification Phosphoserine. The disordered stretch occupies residues 176–196 (PFGESSFNNELPQDNQEVTCS). Over residues 178–196 (GESSFNNELPQDNQEVTCS) the composition is skewed to polar residues.

This sequence belongs to the small heat shock protein (HSP20) family. Monomer. Forms a ternary complex with BAG3 and HSPA1A. Component of the chaperone-assisted selective autophagy (CASA) complex consisting of BAG3, HSPA8/HSC70, HSPB8 and STUB1/CHIP. Interacts with HSPB1. Interacts with DNAJB6. Interacts with BAG3. Highly expressed in skeletal muscle, heart, uterus, liver, lung and ovary. Low levels found in stomach and brain. Not detected in small intestine, large intestine, kidney, spleen and testis. In the ovary, expression is concentrated in the endometrium and in the connective tissue between the circular and longitudinal muscles of the myometrium.

The protein resides in the cytoplasm. The protein localises to the nucleus. In terms of biological role, involved in the chaperone-assisted selective autophagy (CASA), a crucial process for protein quality control, particularly in mechanical strained cells and tissues such as muscle. Displays temperature-dependent chaperone activity. In Mus musculus (Mouse), this protein is Heat shock protein beta-8 (Hspb8).